A 161-amino-acid chain; its full sequence is Cytochrome b6-f complex subunit 4 (161 aa).

Transmembrane regions (helical) follow at residues 37 to 57, 96 to 116, and 132 to 152; these read LLYI…GLAV, LLGV…PFIE, and SVFL…TLPI.

The protein belongs to the cytochrome b family. PetD subfamily. In terms of assembly, the 4 large subunits of the cytochrome b6-f complex are cytochrome b6, subunit IV (17 kDa polypeptide, PetD), cytochrome f and the Rieske protein, while the 4 small subunits are PetG, PetL, PetM and PetN. The complex functions as a dimer.

Its subcellular location is the cellular thylakoid membrane. Component of the cytochrome b6-f complex, which mediates electron transfer between photosystem II (PSII) and photosystem I (PSI), cyclic electron flow around PSI, and state transitions. This is Cytochrome b6-f complex subunit 4 from Acaryochloris marina (strain MBIC 11017).